A 116-amino-acid polypeptide reads, in one-letter code: POU domain, class 4, transcription factor 1 (116 aa).

A POU-specific domain is found at 1–54 (VTQADVGSALANLKIPGVGSLSQSTICRFESLTLSHNNMIALKPILQAWLEEAE). Residues 56-79 (AQREKMNKPELFNGGEKKRKRTSI) form a disordered region. The homeobox DNA-binding region spans 72-116 (KKRKRTSIAAPEKRSLEAYFAVQPRPSSEKIAAIAEKLDLKKNVV).

This sequence belongs to the POU transcription factor family. Class-4 subfamily.

It localises to the nucleus. The protein resides in the cytoplasm. In terms of biological role, multifunctional transcription factor with different regions mediating its different effects. Acts by binding (via its C-terminal domain) to sequences related to the consensus octamer motif 5'-ATGCAAAT-3' in the regulatory regions of its target genes. Regulates the expression of specific genes involved in differentiation and survival within a subset of neuronal lineages. It has been shown that activation of some of these genes requires its N-terminal domain, maybe through a neuronal-specific cofactor. The sequence is that of POU domain, class 4, transcription factor 1 (POU4F1) from Gallus gallus (Chicken).